The chain runs to 695 residues: Variediene synthase (695 aa).

Residues 1–23 are disordered; that stretch reads MVPTSLSPDDTSDPVPRSSSDIQ. The interval 7 to 332 is terpene cyclase; that stretch reads SPDDTSDPVP…PRYHPWLCEE (326 aa). Asp-98 is a binding site for Mg(2+). Residues Asp-98, 184–187, Asn-228, 232–236, and 324–325 each bind substrate; these read RIID, SFDIE, and RY. The DDXXD 1 motif lies at 98–102; sequence DNVVE. The short motif at 228 to 236 is the NSE/DTE element; that stretch reads NDYFSFDIE. A disordered region spans residues 353 to 392; sequence RRSISGDSISSESSVWSGASDRSARSSVSSAPSLDEGKEP. Over residues 357–385 the composition is skewed to low complexity; it reads SGDSISSESSVWSGASDRSARSSVSSAPS. Isopentenyl diphosphate contacts are provided by Lys-415, Arg-418, and His-447. 2 residues coordinate Mg(2+): Asp-454 and Asp-458. The DDXXD 2 motif lies at 454-458; that stretch reads DDIED. Arg-463 lines the dimethylallyl diphosphate pocket. Arg-464 provides a ligand contact to isopentenyl diphosphate. Positions 541, 542, 579, 586, 595, and 605 each coordinate dimethylallyl diphosphate.

In the N-terminal section; belongs to the terpene synthase family. It in the C-terminal section; belongs to the FPP/GGPP synthase family. Hexamer. Requires Mg(2+) as cofactor.

The catalysed reaction is isopentenyl diphosphate + (2E,6E)-farnesyl diphosphate = (2E,6E,10E)-geranylgeranyl diphosphate + diphosphate. The enzyme catalyses (2E,6E,10E)-geranylgeranyl diphosphate = variediene + diphosphate. It functions in the pathway secondary metabolite biosynthesis; terpenoid biosynthesis. Functionally, bifunctional terpene synthase converts DMAPP and IPP, and also GGPP, into variediene as a single product. The C-terminal prenyltransferase domain of AbVS catalyzes formation of GGPP, whereas the N-terminal terpene cyclase domain catalyzes the cyclization of GGPP to variediene. In Aspergillus brasiliensis (strain CBS 101740 / IMI 381727 / IBT 21946), this protein is Variediene synthase.